A 709-amino-acid polypeptide reads, in one-letter code: Anillin-like protein 3 (709 aa).

One can recognise a PH domain in the interval Asp584–Asp705.

This is Anillin-like protein 3 (ani-3) from Caenorhabditis elegans.